Here is a 421-residue protein sequence, read N- to C-terminus: UDP-N-acetylglucosamine 1-carboxyvinyltransferase (421 aa).

24–25 lines the phosphoenolpyruvate pocket; the sequence is KN. R93 serves as a coordination point for UDP-N-acetyl-alpha-D-glucosamine. The Proton donor role is filled by C117. 2-(S-cysteinyl)pyruvic acid O-phosphothioketal is present on C117. D307 and I329 together coordinate UDP-N-acetyl-alpha-D-glucosamine.

This sequence belongs to the EPSP synthase family. MurA subfamily.

The protein localises to the cytoplasm. It carries out the reaction phosphoenolpyruvate + UDP-N-acetyl-alpha-D-glucosamine = UDP-N-acetyl-3-O-(1-carboxyvinyl)-alpha-D-glucosamine + phosphate. It participates in cell wall biogenesis; peptidoglycan biosynthesis. Its function is as follows. Cell wall formation. Adds enolpyruvyl to UDP-N-acetylglucosamine. The sequence is that of UDP-N-acetylglucosamine 1-carboxyvinyltransferase from Blochmanniella pennsylvanica (strain BPEN).